The following is a 503-amino-acid chain: Aromatase (503 aa).

Substrate is bound by residues Asp309 and Met374. Cys437 serves as a coordination point for heme.

The protein belongs to the cytochrome P450 family. Heme serves as cofactor.

It is found in the membrane. The catalysed reaction is testosterone + 3 reduced [NADPH--hemoprotein reductase] + 3 O2 = 17beta-estradiol + formate + 3 oxidized [NADPH--hemoprotein reductase] + 4 H2O + 4 H(+). It carries out the reaction androst-4-ene-3,17-dione + 3 reduced [NADPH--hemoprotein reductase] + 3 O2 = estrone + formate + 3 oxidized [NADPH--hemoprotein reductase] + 4 H2O + 4 H(+). Functionally, catalyzes the formation of aromatic C18 estrogens from C19 androgens. This is Aromatase (CYP19A1) from Callithrix jacchus (White-tufted-ear marmoset).